A 154-amino-acid chain; its full sequence is Myoglobin (154 aa).

In terms of domain architecture, Globin spans 2–148 (GLSDGEWQLV…FRNDMAAKYK (147 aa)). Serine 4 is modified (phosphoserine). Histidine 65 lines the nitrite pocket. Histidine 65 contributes to the O2 binding site. Threonine 68 carries the post-translational modification Phosphothreonine. A heme b-binding site is contributed by histidine 94.

This sequence belongs to the globin family. As to quaternary structure, monomeric.

The protein resides in the cytoplasm. It localises to the sarcoplasm. The catalysed reaction is Fe(III)-heme b-[protein] + nitric oxide + H2O = Fe(II)-heme b-[protein] + nitrite + 2 H(+). It carries out the reaction H2O2 + AH2 = A + 2 H2O. Its function is as follows. Monomeric heme protein which primary function is to store oxygen and facilitate its diffusion within muscle tissues. Reversibly binds oxygen through a pentacoordinated heme iron and enables its timely and efficient release as needed during periods of heightened demand. Depending on the oxidative conditions of tissues and cells, and in addition to its ability to bind oxygen, it also has a nitrite reductase activity whereby it regulates the production of bioactive nitric oxide. Under stress conditions, like hypoxia and anoxia, it also protects cells against reactive oxygen species thanks to its pseudoperoxidase activity. The sequence is that of Myoglobin (MB) from Ochotona curzoniae (Black-lipped pika).